We begin with the raw amino-acid sequence, 190 residues long: Elongation factor P (190 aa).

This sequence belongs to the elongation factor P family.

It is found in the cytoplasm. It functions in the pathway protein biosynthesis; polypeptide chain elongation. Its function is as follows. Involved in peptide bond synthesis. Stimulates efficient translation and peptide-bond synthesis on native or reconstituted 70S ribosomes in vitro. Probably functions indirectly by altering the affinity of the ribosome for aminoacyl-tRNA, thus increasing their reactivity as acceptors for peptidyl transferase. This chain is Elongation factor P (efp), found in Mycoplasma pneumoniae (strain ATCC 29342 / M129 / Subtype 1) (Mycoplasmoides pneumoniae).